The chain runs to 214 residues: Cytochrome c biogenesis ATP-binding export protein CcmA (214 aa).

The region spanning 12–214 (LAAHDLAFSR…TRMLTLEVAA (203 aa)) is the ABC transporter domain. An ATP-binding site is contributed by 44–51 (GDNGAGKT).

It belongs to the ABC transporter superfamily. CcmA exporter (TC 3.A.1.107) family. As to quaternary structure, the complex is composed of two ATP-binding proteins (CcmA) and two transmembrane proteins (CcmB).

The protein localises to the cell inner membrane. It catalyses the reaction heme b(in) + ATP + H2O = heme b(out) + ADP + phosphate + H(+). Functionally, part of the ABC transporter complex CcmAB involved in the biogenesis of c-type cytochromes; once thought to export heme, this seems not to be the case, but its exact role is uncertain. Responsible for energy coupling to the transport system. This Xanthomonas axonopodis pv. citri (strain 306) protein is Cytochrome c biogenesis ATP-binding export protein CcmA.